A 354-amino-acid polypeptide reads, in one-letter code: Probable cinnamyl alcohol dehydrogenase 1 (354 aa).

Cysteine 47 contacts Zn(2+). Residue serine 49 coordinates NADP(+). Positions 69, 70, 100, 103, 106, 114, and 163 each coordinate Zn(2+). NADP(+) is bound by residues threonine 167, 188–193 (GLGGVG), 211–216 (SSSDKK), threonine 251, glycine 275, and 296–298 (SFI).

The protein belongs to the zinc-containing alcohol dehydrogenase family. In terms of assembly, homodimer. Zn(2+) serves as cofactor.

It catalyses the reaction (E)-cinnamyl alcohol + NADP(+) = (E)-cinnamaldehyde + NADPH + H(+). The enzyme catalyses (E)-coniferol + NADP(+) = (E)-coniferaldehyde + NADPH + H(+). The catalysed reaction is (E)-sinapyl alcohol + NADP(+) = (E)-sinapaldehyde + NADPH + H(+). It carries out the reaction (E)-4-coumaroyl alcohol + NADP(+) = (E)-4-coumaraldehyde + NADPH + H(+). It catalyses the reaction (E)-caffeyl alcohol + NADP(+) = (E)-caffeyl aldehyde + NADPH + H(+). It participates in aromatic compound metabolism; phenylpropanoid biosynthesis. In terms of biological role, involved in lignin biosynthesis. Catalyzes the final step specific for the production of lignin monomers. Catalyzes the NADPH-dependent reduction of coniferaldehyde, 5-hydroxyconiferaldehyde, sinapaldehyde, 4-coumaraldehyde and caffeyl aldehyde to their respective alcohols. This is Probable cinnamyl alcohol dehydrogenase 1 (CAD1) from Eucalyptus gunnii (Cider gum).